Reading from the N-terminus, the 188-residue chain is Mitochondrial import inner membrane translocase subunit Tim23B (188 aa).

A run of 2 helical transmembrane segments spans residues 73–93 (FELAFFTIGGCCMTGAAFGAM) and 125–145 (ALWANTLGSLALLYSAFGVII).

This sequence belongs to the Tim17/Tim22/Tim23 family.

It is found in the mitochondrion inner membrane. Functionally, may participate in the translocation of transit peptide-containing proteins across the mitochondrial inner membrane. the PAM complex. The sequence is that of Mitochondrial import inner membrane translocase subunit Tim23B from Homo sapiens (Human).